We begin with the raw amino-acid sequence, 370 residues long: Mesoderm posterior protein 2 (370 aa).

Disordered stretches follow at residues 51 to 89 (PSQP…EREK), 231 to 265 (SLER…HWTQ), and 325 to 350 (TSED…GLQL). Over residues 57-77 (PARSTRTTQATAPRRTRPAPA) the composition is skewed to low complexity. The region spanning 79–133 (GQRQSASEREKLRMRTLARALQELRRFLPPSVAPAGQSLTKIETLRLAIRYIGHL) is the bHLH domain. Positions 325–334 (TSEDQGSSPA) are enriched in polar residues. The may contain a degradation domain stretch occupies residues 326 to 330 (SEDQG).

In terms of processing, degraded by the proteasome. Post-translationally, phosphorylated.

The protein localises to the nucleus. Functionally, transcription factor with important role in somitogenesis. Defines the rostrocaudal patterning of the somite by participating in distinct Notch pathways. Also regulates the FGF signaling pathway. Specifies the rostral half of the somites. Generates rostro-caudal polarity of somites by down-regulating in the presumptive rostral domain DLL1, a Notch ligand. Participates in the segment border formation by activating in the anterior presomitic mesoderm LFNG, a negative regulator of DLL1-Notch signaling. Acts as a strong suppressor of Notch activity. Together with MESP1 is involved in the epithelialization of somitic mesoderm and in the development of cardiac mesoderm. May play a role with Tcf15 in the differentiation of myotomal and sclerotomal cells by regulating Pax family genes. Also controls the expression of the protocadherin PCDH8/PAPC, EPHA4, RIPPLY2, NOTCH2, FGFR1, and CER1. Binds to the E-boxes within the EPH4A and RIPPLY2 enhancers. In Mus musculus (Mouse), this protein is Mesoderm posterior protein 2 (Mesp2).